A 149-amino-acid polypeptide reads, in one-letter code: Probable ubiquitin-conjugating enzyme E2 W (149 aa).

Residues 4 to 149 (RYAKRLQKEL…VRWMFHDDTV (146 aa)) enclose the UBC core domain. Catalysis depends on cysteine 88, which acts as the Glycyl thioester intermediate.

The protein belongs to the ubiquitin-conjugating enzyme family.

It carries out the reaction S-ubiquitinyl-[E1 ubiquitin-activating enzyme]-L-cysteine + [E2 ubiquitin-conjugating enzyme]-L-cysteine = [E1 ubiquitin-activating enzyme]-L-cysteine + S-ubiquitinyl-[E2 ubiquitin-conjugating enzyme]-L-cysteine.. It catalyses the reaction S-ubiquitinyl-[E1 ubiquitin-activating enzyme]-L-cysteine + [acceptor protein]-N-terminal-amino acid = [E1 ubiquitin-activating enzyme]-L-cysteine + N-terminal-ubiquitinyl-[acceptor protein].. It participates in protein modification; protein ubiquitination. Its function is as follows. Catalyzes the covalent attachment of ubiquitin to other proteins. The chain is Probable ubiquitin-conjugating enzyme E2 W (ube2w) from Dictyostelium discoideum (Social amoeba).